We begin with the raw amino-acid sequence, 248 residues long: Exosome complex component Rrp41 (248 aa).

This sequence belongs to the RNase PH family. Rrp41 subfamily. In terms of assembly, component of the archaeal exosome complex. Forms a hexameric ring-like arrangement composed of 3 Rrp41-Rrp42 heterodimers. The hexameric ring associates with a trimer of Rrp4 and/or Csl4 subunits.

The protein localises to the cytoplasm. In terms of biological role, catalytic component of the exosome, which is a complex involved in RNA degradation. Has 3'-&gt;5' exoribonuclease activity. Can also synthesize heteromeric RNA-tails. Binds RNA. This chain is Exosome complex component Rrp41, found in Saccharolobus solfataricus (strain ATCC 35092 / DSM 1617 / JCM 11322 / P2) (Sulfolobus solfataricus).